The sequence spans 344 residues: Protein pelota homolog (344 aa).

Belongs to the eukaryotic release factor 1 family. Pelota subfamily. In terms of assembly, monomer. A divalent metal cation is required as a cofactor.

Its subcellular location is the cytoplasm. In terms of biological role, may function in recognizing stalled ribosomes, interact with stem-loop structures in stalled mRNA molecules, and effect endonucleolytic cleavage of the mRNA. May play a role in the release non-functional ribosomes and degradation of damaged mRNAs. Has endoribonuclease activity. This is Protein pelota homolog from Saccharolobus islandicus (strain Y.N.15.51 / Yellowstone #2) (Sulfolobus islandicus).